The chain runs to 282 residues: MAGAGLIGIRRRIKSVTNIRKITKAMGLVSTAKLRKARVNLEINKKYYNEYKVILKDIINFIEDSNIYIDGNGSHKKLYVIFTSDSGLCGSFNINIINNVINEIKEDKENSLVIVIGQKGRMYLKKLGINTLAEYIEIPDVPTTKEARTIAKNIIKLYSSKEVGEVFLVYSEFYSPVKQQVLINKILPFTKENKSDNKYIEFNPPVTQFIDEILENYLKATILNCFSNSKASENGSRMTAMNGATDNANDLLDNLDLQFNRLRQSAITQEISEIVGGAEAQR.

The protein belongs to the ATPase gamma chain family. As to quaternary structure, F-type ATPases have 2 components, CF(1) - the catalytic core - and CF(0) - the membrane proton channel. CF(1) has five subunits: alpha(3), beta(3), gamma(1), delta(1), epsilon(1). CF(0) has three main subunits: a, b and c.

Its subcellular location is the cell membrane. Functionally, produces ATP from ADP in the presence of a proton gradient across the membrane. The gamma chain is believed to be important in regulating ATPase activity and the flow of protons through the CF(0) complex. The polypeptide is ATP synthase gamma chain (Clostridium botulinum (strain Okra / Type B1)).